The primary structure comprises 745 residues: Cytoskeleton-associated protein 2-like (745 aa).

Positions 25-141 are disordered; the sequence is AKGKLKSQNT…GELSRKPVGS (117 aa). Over residues 30–61 the composition is skewed to polar residues; it reads KSQNTKPYLKSKNNCQNQPPSKSTIRPKNDVT. Low complexity predominate over residues 109-120; sequence SSNPYSKPSSKS. A compositionally biased stretch (polar residues) spans 121 to 133; that stretch reads FQQCEAGSSTTGE. The short motif at 185-187 is the KEN box element; sequence KEN. Basic and acidic residues predominate over residues 192–203; sequence LTEPERKPDPKL. 3 disordered regions span residues 192-217, 256-276, and 385-411; these read LTEP…YNQT, VKSQ…KPSR, and RFNS…NNGF. Residue lysine 198 forms a Glycyl lysine isopeptide (Lys-Gly) (interchain with G-Cter in SUMO1); alternate linkage. A Glycyl lysine isopeptide (Lys-Gly) (interchain with G-Cter in SUMO2); alternate cross-link involves residue lysine 198. At tyrosine 204 the chain carries Phosphotyrosine. A compositionally biased stretch (polar residues) spans 389–411; that stretch reads AIPSTPSIRPNGTSGNKHNNNGF. Position 742 is a phosphothreonine (threonine 742). Phosphoserine is present on serine 745.

It belongs to the CKAP2 family. In terms of processing, ubiquitinated by the anaphase promoting complex/cyclosome (APC/C).

It localises to the cytoplasm. The protein resides in the cytoskeleton. It is found in the spindle pole. Functionally, microtubule-associated protein required for mitotic spindle formation and cell-cycle progression in neural progenitor cells. This is Cytoskeleton-associated protein 2-like (CKAP2L) from Homo sapiens (Human).